Here is a 68-residue protein sequence, read N- to C-terminus: P21 prophage-derived head-stabilizing protein (68 aa).

The protein belongs to the lambda phage gpW family.

The chain is P21 prophage-derived head-stabilizing protein from Escherichia coli O6:H1 (strain CFT073 / ATCC 700928 / UPEC).